The sequence spans 151 residues: Cytochrome c-type biogenesis protein CcmE (151 aa).

Residues 1-8 (MNPQRKKR) are Cytoplasmic-facing. A helical; Signal-anchor for type II membrane protein membrane pass occupies residues 9–29 (LLLIVGLLVGVGVAVGFALSA). Over 30 to 151 (LQQNINLFYT…QAAAGGETKP (122 aa)) the chain is Periplasmic. Positions 124 and 128 each coordinate heme.

The protein belongs to the CcmE/CycJ family.

It is found in the cell inner membrane. Its function is as follows. Heme chaperone required for the biogenesis of c-type cytochromes. Transiently binds heme delivered by CcmC and transfers the heme to apo-cytochromes in a process facilitated by CcmF and CcmH. This Pseudomonas putida (strain ATCC 700007 / DSM 6899 / JCM 31910 / BCRC 17059 / LMG 24140 / F1) protein is Cytochrome c-type biogenesis protein CcmE.